We begin with the raw amino-acid sequence, 202 residues long: Myosin regulatory light chain 10 (202 aa).

A disordered region spans residues 1-21 (MGQSSLDHGVQGPVAGTGDFG). 3 consecutive EF-hand domains span residues 60–95 (SQIQ…LGRI), 130–165 (DPEE…QADR), and 166–201 (FSEE…GEEK). Residues Asp73, Asn75, Asp77, and Asp84 each coordinate Ca(2+).

Myosin is a hexamer of 2 heavy chains and 4 light chains. As to expression, specifically expressed in precursor B- and T-lymphocytes.

This is Myosin regulatory light chain 10 (Myl10) from Mus musculus (Mouse).